We begin with the raw amino-acid sequence, 375 residues long: Trichodiene synthase (375 aa).

The protein belongs to the trichodiene synthase family.

The enzyme catalyses (2E,6E)-farnesyl diphosphate = trichodiene + diphosphate. Its pathway is sesquiterpene biosynthesis; trichothecene biosynthesis. Its function is as follows. TS is a member of the terpene cyclase group of enzymes. It catalyzes the isomerization and cyclization of farnesyl pyro-phosphate to form trichodiene, the first cyclic intermediate in the biosynthetic pathway for trichothecenes. It serves to branch trichothecene biosynthesis from the isoprenoid pathway. The polypeptide is Trichodiene synthase (TRI5) (Fusarium cortaderiae).